Consider the following 480-residue polypeptide: Endothelial transcription factor GATA-2 (480 aa).

Ser73 is modified (phosphoserine). Asymmetric dimethylarginine is present on Arg86. Positions 166–208 (SGSHLFGFPPTPPKEVSPDPSTTGAASPASSSAGGSVARGEDK) are disordered. Low complexity predominate over residues 183 to 201 (PDPSTTGAASPASSSAGGS). The residue at position 192 (Ser192) is a Phosphoserine. 2 consecutive GATA-type zinc fingers follow at residues 295–319 (CVNC…CNAC) and 349–373 (CANC…CNAC). Lys389 is covalently cross-linked (Glycyl lysine isopeptide (Lys-Gly) (interchain with G-Cter in SUMO2)). The segment at 457–480 (TPIHPSSSLSFGHPHPSSMVTAMG) is disordered.

Interacts with BRD3. Interacts with AR and CCAR1. Interacts with MDFIC.

The protein resides in the nucleus. Its function is as follows. Transcriptional activator which regulates endothelin-1 gene expression in endothelial cells. Binds to the consensus sequence 5'-AGATAG-3'. This chain is Endothelial transcription factor GATA-2 (Gata2), found in Mus musculus (Mouse).